We begin with the raw amino-acid sequence, 505 residues long: Hexose transporter 1 (505 aa).

The Cytoplasmic segment spans residues 1 to 27 (MNILRMDILSRGGTQEIEHRDGFFNTS). The chain crosses the membrane as a helical span at residues 28–48 (FQYVLSACLASFIFGYQVSVL). Topologically, residues 49 to 78 (NTIKSYIVVEFEWCSTKTDTSCEDSILKSS) are extracellular. Cys62 and Cys70 are joined by a disulfide. The helical transmembrane segment at 79 to 99 (FLLASVFIGAVLGSGFSGYLV) threads the bilayer. Residues 100–104 (KFGRR) are Cytoplasmic-facing. Residues 105 to 125 (FSLMVIYIFFIFVSILTAISH) traverse the membrane as a helical segment. Topologically, residues 126 to 134 (HFHTILYAR) are extracellular. Residues 135-155 (LLSGFGIGLITVSVPMYISEM) traverse the membrane as a helical segment. The Cytoplasmic segment spans residues 156 to 165 (THKDKKGAYG). Residues 166–186 (VLHQLFITFGIFVAVLLGLFL) form a helical membrane-spanning segment. Gln169 contacts alpha-D-glucose. A beta-D-glucose-binding site is contributed by Gln169. Residues 187–208 (GDGPKINGKSIELSNFEMFWWR) lie on the Extracellular side of the membrane. A helical transmembrane segment spans residues 209 to 229 (FMFFLPTIISLLGIILLIAFY). The Cytoplasmic portion of the chain corresponds to 230–294 (KEETPYFLYE…SALKIPAYRN (65 aa)). Residues 295–315 (VIILGCILSGFQQFTGINVLV) traverse the membrane as a helical segment. Alpha-D-glucose-binding residues include Gln306, Gln307, and Asn312. Beta-D-glucose is bound at residue Gln306. Asn312 serves as a coordination point for beta-D-glucose. Topologically, residues 316 to 332 (ANSNELYKEFLDKNLIT) are extracellular. A helical membrane pass occupies residues 333-353 (ILSVIMTAVNFLMTFPAIYII). Asn342 is a beta-D-glucose binding site. The Cytoplasmic portion of the chain corresponds to 354 to 358 (EKIGR). Residues 359–379 (KTLLLGGCIGVICAFLPTVIA) form a helical membrane-spanning segment. The Extracellular portion of the chain corresponds to 380–393 (RQVWGPTKIVNGLS). Residues 394 to 414 (IAGTFLMIISFAVSYGPVLWI) traverse the membrane as a helical segment. Trp413 is an alpha-D-glucose binding site. Residues 415–430 (YLHEMYPSEIKDSAAS) are Cytoplasmic-facing. A helical transmembrane segment spans residues 431–451 (LASLINWVCAIIVVFPSDIII). The Extracellular segment spans residues 452 to 456 (KKSPS). A helical membrane pass occupies residues 457–477 (ILFMFFSVMCIIAFLFIMFFI). Residues 478–505 (KETKGGEIGTSPYISLEERQKHIGKSKV) lie on the Cytoplasmic side of the membrane.

This sequence belongs to the major facilitator superfamily. Sugar transporter (TC 2.A.1.1) family. Homodimer.

The protein resides in the cell membrane. It carries out the reaction D-glucose(out) = D-glucose(in). The catalysed reaction is D-fructose(out) = D-fructose(in). The enzyme catalyses D-galactose(in) = D-galactose(out). It catalyses the reaction D-mannose(out) = D-mannose(in). It carries out the reaction D-glucosamine(out) = D-glucosamine(in). The catalysed reaction is D-xylose(out) = D-xylose(in). With respect to regulation, inhibited by cytochalasin B. In terms of biological role, sodium-independent facilitative hexose transporter. Can transport D-glucose and D-fructose. Can transport D-mannose, D-galactose, D-xylose and D-glucosamine. The sequence is that of Hexose transporter 1 from Plasmodium yoelii yoelii.